A 482-amino-acid polypeptide reads, in one-letter code: tRNA sulfurtransferase (482 aa).

One can recognise a THUMP domain in the interval 61–165; sequence LAIRDALTRI…DDRLLLIKGR (105 aa). ATP-binding positions include 183-184, Lys-265, Gly-287, and Gln-296; that span reads LI. Cys-344 and Cys-456 are joined by a disulfide. The Rhodanese domain occupies 404 to 482; it reads FGPNDVILDI…GFANVKVYRP (79 aa). Cys-456 (cysteine persulfide intermediate) is an active-site residue.

This sequence belongs to the ThiI family.

It is found in the cytoplasm. It carries out the reaction [ThiI sulfur-carrier protein]-S-sulfanyl-L-cysteine + a uridine in tRNA + 2 reduced [2Fe-2S]-[ferredoxin] + ATP + H(+) = [ThiI sulfur-carrier protein]-L-cysteine + a 4-thiouridine in tRNA + 2 oxidized [2Fe-2S]-[ferredoxin] + AMP + diphosphate. The enzyme catalyses [ThiS sulfur-carrier protein]-C-terminal Gly-Gly-AMP + S-sulfanyl-L-cysteinyl-[cysteine desulfurase] + AH2 = [ThiS sulfur-carrier protein]-C-terminal-Gly-aminoethanethioate + L-cysteinyl-[cysteine desulfurase] + A + AMP + 2 H(+). It functions in the pathway cofactor biosynthesis; thiamine diphosphate biosynthesis. In terms of biological role, catalyzes the ATP-dependent transfer of a sulfur to tRNA to produce 4-thiouridine in position 8 of tRNAs, which functions as a near-UV photosensor. Also catalyzes the transfer of sulfur to the sulfur carrier protein ThiS, forming ThiS-thiocarboxylate. This is a step in the synthesis of thiazole, in the thiamine biosynthesis pathway. The sulfur is donated as persulfide by IscS. This Salmonella heidelberg (strain SL476) protein is tRNA sulfurtransferase.